A 266-amino-acid chain; its full sequence is Imidazole glycerol phosphate synthase subunit HisF (266 aa).

Residues D11 and D130 contribute to the active site.

This sequence belongs to the HisA/HisF family. As to quaternary structure, heterodimer of HisH and HisF.

The protein localises to the cytoplasm. The catalysed reaction is 5-[(5-phospho-1-deoxy-D-ribulos-1-ylimino)methylamino]-1-(5-phospho-beta-D-ribosyl)imidazole-4-carboxamide + L-glutamine = D-erythro-1-(imidazol-4-yl)glycerol 3-phosphate + 5-amino-1-(5-phospho-beta-D-ribosyl)imidazole-4-carboxamide + L-glutamate + H(+). It functions in the pathway amino-acid biosynthesis; L-histidine biosynthesis; L-histidine from 5-phospho-alpha-D-ribose 1-diphosphate: step 5/9. Its function is as follows. IGPS catalyzes the conversion of PRFAR and glutamine to IGP, AICAR and glutamate. The HisF subunit catalyzes the cyclization activity that produces IGP and AICAR from PRFAR using the ammonia provided by the HisH subunit. In Nitrosopumilus maritimus (strain SCM1), this protein is Imidazole glycerol phosphate synthase subunit HisF.